Consider the following 154-residue polypeptide: Superoxide dismutase [Cu-Zn] 1 (154 aa).

The Cu cation site is built by H47, H49, and H64. The cysteines at positions 58 and 147 are disulfide-linked. H64, H72, H81, and D84 together coordinate Zn(2+). H121 is a Cu cation binding site. R144 is a substrate binding site.

The protein belongs to the Cu-Zn superoxide dismutase family. In terms of assembly, homodimer. It depends on Cu cation as a cofactor. The cofactor is Zn(2+).

It localises to the cytoplasm. It catalyses the reaction 2 superoxide + 2 H(+) = H2O2 + O2. Its function is as follows. Destroys radicals which are normally produced within the cells and which are toxic to biological systems. The sequence is that of Superoxide dismutase [Cu-Zn] 1 (SOD1) from Debaryomyces hansenii (strain ATCC 36239 / CBS 767 / BCRC 21394 / JCM 1990 / NBRC 0083 / IGC 2968) (Yeast).